Reading from the N-terminus, the 222-residue chain is Nudix hydrolase 11 (222 aa).

One can recognise a Nudix hydrolase domain in the interval 31-175 (AKSSAVLVCL…EGERYLLQYF (145 aa)). The Nudix box signature appears at 73 to 96 (GGKRDQEDKDDIATALREAREEIG). Mg(2+) is bound by residues E90 and E94. The helical transmembrane segment at 186-204 (FIIWALTAGILIRVASIVY) threads the bilayer.

The protein belongs to the Nudix hydrolase family. PCD1 subfamily. It depends on Mn(2+) as a cofactor. The cofactor is Mg(2+). Expressed in roots, stems and leaves.

The protein resides in the peroxisome membrane. Its function is as follows. Coenzyme A diphosphatase which mediates the cleavage of CoA into 3',5'-ADP from CoA and 4'-phosphopantetheine. Can use malonyl-CoA, hexanoyl-CoA, lauroyl-CoA, myristoyl-CoA and palmitoyl-CoA as substrates, but not isobutyryl-CoA or propionyl-CoA. The protein is Nudix hydrolase 11 (NUDT11) of Arabidopsis thaliana (Mouse-ear cress).